A 185-amino-acid chain; its full sequence is Ribosome-recycling factor (185 aa).

Belongs to the RRF family.

It localises to the cytoplasm. Its function is as follows. Responsible for the release of ribosomes from messenger RNA at the termination of protein biosynthesis. May increase the efficiency of translation by recycling ribosomes from one round of translation to another. The chain is Ribosome-recycling factor from Mycobacterium leprae (strain Br4923).